Here is a 226-residue protein sequence, read N- to C-terminus: Probable transaldolase (226 aa).

K91 (schiff-base intermediate with substrate) is an active-site residue.

The protein belongs to the transaldolase family. Type 3B subfamily.

Its subcellular location is the cytoplasm. It carries out the reaction D-sedoheptulose 7-phosphate + D-glyceraldehyde 3-phosphate = D-erythrose 4-phosphate + beta-D-fructose 6-phosphate. Its pathway is carbohydrate degradation; pentose phosphate pathway; D-glyceraldehyde 3-phosphate and beta-D-fructose 6-phosphate from D-ribose 5-phosphate and D-xylulose 5-phosphate (non-oxidative stage): step 2/3. In terms of biological role, transaldolase is important for the balance of metabolites in the pentose-phosphate pathway. The chain is Probable transaldolase from Chlorobium phaeobacteroides (strain DSM 266 / SMG 266 / 2430).